The following is a 21-amino-acid chain: Dart gland peptide (21 aa).

Positions 1–21 (SINNTGGSGNRRLDKNGFAGQ) are disordered. Residue Asn-3 is glycosylated (N-linked (GlcNAc...) asparagine).

It localises to the secreted. This is Dart gland peptide from Cornu aspersum (Brown garden snail).